Reading from the N-terminus, the 186-residue chain is UPF0303 protein ZMO1353 (186 aa).

The protein belongs to the UPF0303 family.

The sequence is that of UPF0303 protein ZMO1353 from Zymomonas mobilis subsp. mobilis (strain ATCC 31821 / ZM4 / CP4).